The primary structure comprises 188 residues: HTH-type transcriptional repressor AcnR (188 aa).

Residues 10–70 (VNSRQEILEG…ALAREDAARM (61 aa)) form the HTH tetR-type domain. Residues 33–52 (TVRRLEEATGKSRGAIFHHF) constitute a DNA-binding region (H-T-H motif). Citrate contacts are provided by residues 79–80 (LV), arginine 130, and asparagine 134. A Mg(2+)-binding site is contributed by glutamate 181. Residue arginine 185 coordinates citrate.

In terms of assembly, homodimer.

Functionally, acnR negatively controls the expression of the aconitase gene acn. The protein is HTH-type transcriptional repressor AcnR of Corynebacterium efficiens (strain DSM 44549 / YS-314 / AJ 12310 / JCM 11189 / NBRC 100395).